Consider the following 214-residue polypeptide: Thymidylate kinase (214 aa).

7–14 (GIDGAGKS) serves as a coordination point for ATP.

This sequence belongs to the thymidylate kinase family.

The catalysed reaction is dTMP + ATP = dTDP + ADP. Functionally, phosphorylation of dTMP to form dTDP in both de novo and salvage pathways of dTTP synthesis. The sequence is that of Thymidylate kinase from Chlorobium luteolum (strain DSM 273 / BCRC 81028 / 2530) (Pelodictyon luteolum).